The sequence spans 193 residues: Ion-translocating oxidoreductase complex subunit A (193 aa).

The next 6 membrane-spanning stretches (helical) occupy residues 5–25 (ALLLLSTALVNNVVLVKFLGL), 39–59 (LGMGLATTFVITLAAAASWML), 62–82 (WLLAPFDLGFLRILSFILVIA), 102–122 (SLGIYLPLITTNCAVLGVALL), 134–154 (VLFGFGSALGFTLVLLIFAGL), and 172–192 (AAFITISLLSLAFMGLSGLVA).

The protein belongs to the NqrDE/RnfAE family. As to quaternary structure, the complex is composed of six subunits: RnfA, RnfB, RnfC, RnfD, RnfE and RnfG.

It localises to the cell inner membrane. Part of a membrane-bound complex that couples electron transfer with translocation of ions across the membrane. This chain is Ion-translocating oxidoreductase complex subunit A, found in Aromatoleum aromaticum (strain DSM 19018 / LMG 30748 / EbN1) (Azoarcus sp. (strain EbN1)).